We begin with the raw amino-acid sequence, 407 residues long: Venom metalloproteinase 3 (407 aa).

N42, N91, N126, and N166 each carry an N-linked (GlcNAc...) asparagine glycan. Residues 191-405 (FYPKLLVLVD…TSAACLKDTY (215 aa)) form the Peptidase M12B domain. 2 disulfides stabilise this stretch: C317/C400 and C356/C384. H340 contacts Zn(2+). The active site involves E341. Residues H344 and H350 each contribute to the Zn(2+) site. N-linked (GlcNAc...) asparagine glycosylation is present at N391.

In the C-terminal section; belongs to the venom metalloproteinase (M12B) family. As to quaternary structure, monomer. It depends on Zn(2+) as a cofactor. As to expression, expressed by the venom gland.

Its subcellular location is the secreted. The gelatinase activity is inhibited by EDTA. In terms of biological role, the recombinant protein has gelatinase activity. In vivo, injection of this recombinant into fifth instar L.oleracea (host) larvae results in partial insect mortality associated with the molt to sixth instar, with surviving insects showing retarded development and growth. This chain is Venom metalloproteinase 3, found in Eulophus pennicornis (Parasitoid wasp).